A 406-amino-acid polypeptide reads, in one-letter code: CinA-like protein (406 aa).

Belongs to the CinA family.

The chain is CinA-like protein from Deinococcus geothermalis (strain DSM 11300 / CIP 105573 / AG-3a).